Reading from the N-terminus, the 456-residue chain is UPF0496 protein 4 (456 aa).

A helical transmembrane segment spans residues 195 to 217; sequence VLMRALYGIESVTVFVCSIFVAV. A disordered region spans residues 368 to 390; it reads QDSNVKQANGSSDESALVVPERT. Polar residues predominate over residues 371 to 381; it reads NVKQANGSSDE.

Belongs to the ROH1 family.

The protein localises to the membrane. In Oryza sativa subsp. japonica (Rice), this protein is UPF0496 protein 4.